A 690-amino-acid polypeptide reads, in one-letter code: Potassium-transporting ATPase ATP-binding subunit (690 aa).

Positions 1-23 are disordered; it reads MNSTSTVRQPGGPRQQRRHTPKA. 4 consecutive transmembrane segments (helical) span residues 44 to 64, 78 to 98, 233 to 253, and 268 to 288; these read IMVKNPVMFMVWVGTLITGML, AMFNGLVTVILLFTVLFANFA, IALTVLLAVLTLVFLIVVATL, and LLIALLVALIPTTIGGLLSAI. Asp321 functions as the 4-aspartylphosphate intermediate in the catalytic mechanism. ATP contacts are provided by residues Asp358, Glu362, 389–396, and Lys408; that span reads FSARTRMS. Residues Asp531 and Asp535 each coordinate Mg(2+). 3 consecutive transmembrane segments (helical) span residues 601–621, 627–647, and 665–685; these read FAIIPAMFAGIGIGALNIMDL, AVLSALIYNALIIPALIPLAL, and ILVYGLGGIIVPFVAIKLIDL.

Belongs to the cation transport ATPase (P-type) (TC 3.A.3) family. Type IA subfamily. As to quaternary structure, the system is composed of three essential subunits: KdpA, KdpB and KdpC.

The protein localises to the cell inner membrane. It catalyses the reaction K(+)(out) + ATP + H2O = K(+)(in) + ADP + phosphate + H(+). Part of the high-affinity ATP-driven potassium transport (or Kdp) system, which catalyzes the hydrolysis of ATP coupled with the electrogenic transport of potassium into the cytoplasm. This subunit is responsible for energy coupling to the transport system and for the release of the potassium ions to the cytoplasm. In Synechocystis sp. (strain ATCC 27184 / PCC 6803 / Kazusa), this protein is Potassium-transporting ATPase ATP-binding subunit.